Reading from the N-terminus, the 872-residue chain is Alanine--tRNA ligase (872 aa).

Zn(2+) is bound by residues His-567, His-571, Cys-669, and His-673.

Belongs to the class-II aminoacyl-tRNA synthetase family. It depends on Zn(2+) as a cofactor.

The protein resides in the cytoplasm. The enzyme catalyses tRNA(Ala) + L-alanine + ATP = L-alanyl-tRNA(Ala) + AMP + diphosphate. Its function is as follows. Catalyzes the attachment of alanine to tRNA(Ala) in a two-step reaction: alanine is first activated by ATP to form Ala-AMP and then transferred to the acceptor end of tRNA(Ala). Also edits incorrectly charged Ser-tRNA(Ala) and Gly-tRNA(Ala) via its editing domain. The chain is Alanine--tRNA ligase from Streptococcus pneumoniae serotype 2 (strain D39 / NCTC 7466).